The sequence spans 433 residues: Phosphomethylpyrimidine synthase (433 aa).

Residues Asn-66, Met-94, Tyr-123, His-162, 184 to 186 (SRG), 225 to 228 (DALR), and Glu-264 each bind substrate. A Zn(2+)-binding site is contributed by His-268. Tyr-291 provides a ligand contact to substrate. His-332 is a binding site for Zn(2+). 3 residues coordinate [4Fe-4S] cluster: Cys-408, Cys-411, and Cys-415.

It belongs to the ThiC family. [4Fe-4S] cluster serves as cofactor.

It catalyses the reaction 5-amino-1-(5-phospho-beta-D-ribosyl)imidazole + S-adenosyl-L-methionine = 4-amino-2-methyl-5-(phosphooxymethyl)pyrimidine + CO + 5'-deoxyadenosine + formate + L-methionine + 3 H(+). It functions in the pathway cofactor biosynthesis; thiamine diphosphate biosynthesis. Catalyzes the synthesis of the hydroxymethylpyrimidine phosphate (HMP-P) moiety of thiamine from aminoimidazole ribotide (AIR) in a radical S-adenosyl-L-methionine (SAM)-dependent reaction. The protein is Phosphomethylpyrimidine synthase of Saccharolobus islandicus (strain M.16.27) (Sulfolobus islandicus).